The primary structure comprises 555 residues: CTP synthase (555 aa).

Residues 1 to 271 form an amidoligase domain region; that stretch reads MVKRGKKTKY…DDKLAELFNI (271 aa). Position 19 (S19) interacts with CTP. S19 is a binding site for UTP. ATP-binding positions include 20 to 25 and D77; that span reads SLGKGL. Positions 77 and 145 each coordinate Mg(2+). Residues 152–154, 192–197, and K228 each bind CTP; these read DIE and KTKPTQ. UTP contacts are provided by residues 192–197 and K228; that span reads KTKPTQ. A Glutamine amidotransferase type-1 domain is found at 297-537; the sequence is RIGIVGKYVE…VKAALEHRDA (241 aa). Position 358 (G358) interacts with L-glutamine. Catalysis depends on C385, which acts as the Nucleophile; for glutamine hydrolysis. L-glutamine contacts are provided by residues 386–389, E409, and R466; that span reads LGLQ. Active-site residues include H510 and E512. The tract at residues 535–555 is disordered; the sequence is RDAQQRQPPAEVKKLAVGKNG.

This sequence belongs to the CTP synthase family. In terms of assembly, homotetramer.

It catalyses the reaction UTP + L-glutamine + ATP + H2O = CTP + L-glutamate + ADP + phosphate + 2 H(+). It carries out the reaction L-glutamine + H2O = L-glutamate + NH4(+). The enzyme catalyses UTP + NH4(+) + ATP = CTP + ADP + phosphate + 2 H(+). Its pathway is pyrimidine metabolism; CTP biosynthesis via de novo pathway; CTP from UDP: step 2/2. Allosterically activated by GTP, when glutamine is the substrate; GTP has no effect on the reaction when ammonia is the substrate. The allosteric effector GTP functions by stabilizing the protein conformation that binds the tetrahedral intermediate(s) formed during glutamine hydrolysis. Inhibited by the product CTP, via allosteric rather than competitive inhibition. In terms of biological role, catalyzes the ATP-dependent amination of UTP to CTP with either L-glutamine or ammonia as the source of nitrogen. Regulates intracellular CTP levels through interactions with the four ribonucleotide triphosphates. This chain is CTP synthase, found in Anaeromyxobacter sp. (strain K).